The primary structure comprises 257 residues: Imidazole glycerol phosphate synthase subunit HisF (257 aa).

Catalysis depends on residues aspartate 11 and aspartate 130.

This sequence belongs to the HisA/HisF family. In terms of assembly, heterodimer of HisH and HisF.

It localises to the cytoplasm. It carries out the reaction 5-[(5-phospho-1-deoxy-D-ribulos-1-ylimino)methylamino]-1-(5-phospho-beta-D-ribosyl)imidazole-4-carboxamide + L-glutamine = D-erythro-1-(imidazol-4-yl)glycerol 3-phosphate + 5-amino-1-(5-phospho-beta-D-ribosyl)imidazole-4-carboxamide + L-glutamate + H(+). It participates in amino-acid biosynthesis; L-histidine biosynthesis; L-histidine from 5-phospho-alpha-D-ribose 1-diphosphate: step 5/9. In terms of biological role, IGPS catalyzes the conversion of PRFAR and glutamine to IGP, AICAR and glutamate. The HisF subunit catalyzes the cyclization activity that produces IGP and AICAR from PRFAR using the ammonia provided by the HisH subunit. This is Imidazole glycerol phosphate synthase subunit HisF from Shewanella halifaxensis (strain HAW-EB4).